We begin with the raw amino-acid sequence, 86 residues long: Small ribosomal subunit protein uS17 (86 aa).

This sequence belongs to the universal ribosomal protein uS17 family. Part of the 30S ribosomal subunit.

In terms of biological role, one of the primary rRNA binding proteins, it binds specifically to the 5'-end of 16S ribosomal RNA. This chain is Small ribosomal subunit protein uS17, found in Desulfitobacterium hafniense (strain DSM 10664 / DCB-2).